Here is a 136-residue protein sequence, read N- to C-terminus: Large ribosomal subunit protein bL17 (136 aa).

The protein belongs to the bacterial ribosomal protein bL17 family. In terms of assembly, part of the 50S ribosomal subunit. Contacts protein L32.

This Rickettsia africae (strain ESF-5) protein is Large ribosomal subunit protein bL17.